The chain runs to 408 residues: LL-diaminopimelate aminotransferase (408 aa).

The substrate site is built by tyrosine 15 and glycine 42. Residues tyrosine 72, 108–109 (SK), tyrosine 132, asparagine 187, tyrosine 218, and 246–248 (SFS) each bind pyridoxal 5'-phosphate. Lysine 109, tyrosine 132, and asparagine 187 together coordinate substrate. Position 249 is an N6-(pyridoxal phosphate)lysine (lysine 249). Pyridoxal 5'-phosphate is bound by residues arginine 257 and asparagine 292. Asparagine 292 and arginine 388 together coordinate substrate.

This sequence belongs to the class-I pyridoxal-phosphate-dependent aminotransferase family. LL-diaminopimelate aminotransferase subfamily. In terms of assembly, homodimer. It depends on pyridoxal 5'-phosphate as a cofactor.

It carries out the reaction (2S,6S)-2,6-diaminopimelate + 2-oxoglutarate = (S)-2,3,4,5-tetrahydrodipicolinate + L-glutamate + H2O + H(+). It participates in amino-acid biosynthesis; L-lysine biosynthesis via DAP pathway; LL-2,6-diaminopimelate from (S)-tetrahydrodipicolinate (aminotransferase route): step 1/1. In terms of biological role, involved in the synthesis of meso-diaminopimelate (m-DAP or DL-DAP), required for both lysine and peptidoglycan biosynthesis. Catalyzes the direct conversion of tetrahydrodipicolinate to LL-diaminopimelate. The polypeptide is LL-diaminopimelate aminotransferase (Leptospira biflexa serovar Patoc (strain Patoc 1 / Ames)).